The primary structure comprises 357 residues: Fluoren-9-ol dehydrogenase (357 aa).

Residues 36–67 and Asp-87 contribute to the NADP(+) site; that span reads VTGG…TWDD. Tyr-198 acts as the Proton acceptor in catalysis. NADP(+) is bound at residue Lys-202.

It belongs to the short-chain dehydrogenases/reductases (SDR) family.

The enzyme catalyses 9H-fluoren-9-ol + NADP(+) = 9H-fluoren-9-one + NADPH + H(+). It carries out the reaction 9H-fluoren-9-ol + NAD(+) = 9H-fluoren-9-one + NADH + H(+). Its pathway is aromatic compound metabolism. Catalyzes the dehydrogenation of both 9-fluorenol and 1,1a-dihydroxy-1-hydro-9-fluorenone to produce 9-fluorenone and 2'-carboxy-2,3- dihydroxybiphenyl, respectively. This Terrabacter sp. (strain DBF63) protein is Fluoren-9-ol dehydrogenase.